The sequence spans 188 residues: Putative manganese efflux pump MntP (188 aa).

6 helical membrane-spanning segments follow: residues 3 to 23 (FYAL…VALA), 35 to 55 (IAAT…AGWV), 63 to 83 (FISE…GLKM), 104 to 126 (WMTV…GLAF), 140 to 160 (MATT…GVLF), and 167 to 187 (AGGL…LGLI).

The protein belongs to the MntP (TC 9.B.29) family.

It localises to the cell inner membrane. Probably functions as a manganese efflux pump. The sequence is that of Putative manganese efflux pump MntP from Neisseria meningitidis serogroup B (strain ATCC BAA-335 / MC58).